Reading from the N-terminus, the 744-residue chain is CCR4-NOT transcription complex subunit 10 (744 aa).

The span at 1-16 (MAADKPADQGAEKHEG) shows a compositional bias: basic and acidic residues. The disordered stretch occupies residues 1–25 (MAADKPADQGAEKHEGTGQSSGITD). N-acetylalanine is present on Ala-2. The stretch at 74-107 (KSNQTTTDNLRQTLNQLKNQVHSAVEEMDGLDDV) forms a coiled coil. Residues 183–199 (NNNKNGKNETGNNNNKD) are compositionally biased toward low complexity. Disordered regions lie at residues 183–204 (NNNK…SNHK), 477–521 (QDPK…PPSS), and 602–634 (VSLG…PQCY). The segment covering 484–495 (GAKNSNQLGGNT) has biased composition (polar residues). Positions 496-506 (ESSESSETCSS) are enriched in low complexity. A compositionally biased stretch (polar residues) spans 602–612 (VSLGISSNEQD).

It belongs to the CNOT10 family. As to quaternary structure, component of the CCR4-NOT complex; distinct complexes seem to exist that differ in the participation of probably mutually exclusive catalytic subunits. CNOT10 and CNOT11 form a subcomplex docked to the CNOT1 scaffold.

The protein localises to the cytoplasm. It is found in the nucleus. Its function is as follows. Component of the CCR4-NOT complex which is one of the major cellular mRNA deadenylases and is linked to various cellular processes including bulk mRNA degradation, miRNA-mediated repression, translational repression during translational initiation and general transcription regulation. Additional complex functions may be a consequence of its influence on mRNA expression. Is not required for association of CNOT7 to the CCR4-NOT complex. This is CCR4-NOT transcription complex subunit 10 (CNOT10) from Homo sapiens (Human).